A 219-amino-acid polypeptide reads, in one-letter code: Predicted GPI-anchored protein 6 (219 aa).

Residues 1 to 19 form the signal peptide; the sequence is MQFQTLLVVAGSLVASTLA. Asn-21, Asn-173, and Asn-188 each carry an N-linked (GlcNAc...) asparagine glycan. Gly-194 is lipidated: GPI-anchor amidated glycine. Positions 195–219 are cleaved as a propeptide — removed in mature form; it reads GAVGGASNQITVGFAAIAGLAAILL.

This sequence belongs to the flocculin family. In terms of processing, the GPI-anchor is attached to the protein in the endoplasmic reticulum and serves to target the protein to the cell surface. There, the glucosamine-inositol phospholipid moiety is cleaved off and the GPI-modified mannoprotein is covalently attached via its lipidless GPI glycan remnant to the 1,6-beta-glucan of the outer cell wall layer.

Its subcellular location is the secreted. The protein resides in the cell wall. The protein localises to the membrane. Its function is as follows. Probable cell wall protein that participates directly in adhesive cell-cell interactions. The protein is Predicted GPI-anchored protein 6 (PGA6) of Candida albicans (strain SC5314 / ATCC MYA-2876) (Yeast).